We begin with the raw amino-acid sequence, 474 residues long: MDKPRVRFAPSPTGYLHIGGARTALFNWLWARRNGGTFVLRIEDTDRERSTQLAVDAILDGLRWLGLDWDEGPGVGGPHPPYFQTERLDLYKAHAERLIREGKAYACYCTREELDAQRKQAEAEKRQFRYPGTCRDKPYDPSRPHVVRFRVPDAGATSWNDLVKGVISTPHDTLQDEVILRGDGVPLYNFGAVVDDITMEINLVGRGDDHVNNTARQILMYEALGYPVPTFAHFPMILGADKARLSKRHGATSVTAYRDMGFLPEAVVNYLVRLGWSHGDQELFTLDELVRYFDLKDVGATAGVFNPEKMAWVNHEWLKRRSPEELAKLALPHFRAAGLPAEDDEKLRHVCAVARERAKTLGEYVQQFRYFYAPIALDPKAKAKFLTADTRPVLQAVRDAIAALPALETQAVEQVFHGEAERRGVGLGKVAQPVRVALTGGTASPGMYDVVQILGKDETLKRLDEALRIAGEPG.

The 'HIGH' region motif lies at 10–20; that stretch reads PSPTGYLHIGG. Zn(2+) contacts are provided by Cys107, Cys109, Cys134, and Asp136. A 'KMSKS' region motif is present at residues 244 to 248; the sequence is RLSKR. Lys247 is a binding site for ATP.

It belongs to the class-I aminoacyl-tRNA synthetase family. Glutamate--tRNA ligase type 1 subfamily. As to quaternary structure, monomer. Requires Zn(2+) as cofactor.

The protein localises to the cytoplasm. It catalyses the reaction tRNA(Glu) + L-glutamate + ATP = L-glutamyl-tRNA(Glu) + AMP + diphosphate. In terms of biological role, catalyzes the attachment of glutamate to tRNA(Glu) in a two-step reaction: glutamate is first activated by ATP to form Glu-AMP and then transferred to the acceptor end of tRNA(Glu). This Anaeromyxobacter sp. (strain K) protein is Glutamate--tRNA ligase.